A 670-amino-acid chain; its full sequence is UvrABC system protein B (670 aa).

Residues 26-183 (EGLEDGLAHQ…RRLAELQYSR (158 aa)) enclose the Helicase ATP-binding domain. 39–46 (GVTGSGKT) lines the ATP pocket. Positions 92–115 (YYDYYQPEAYVPSSDTFIEKDASV) match the Beta-hairpin motif. The 167-residue stretch at 431-597 (QVDDLLSEIR…GLNKKISDIL (167 aa)) folds into the Helicase C-terminal domain. The 36-residue stretch at 630–665 (ELKIRELESKMLTHAQNLEFEEAAALRDELQALRAQ) folds into the UVR domain.

This sequence belongs to the UvrB family. As to quaternary structure, forms a heterotetramer with UvrA during the search for lesions. Interacts with UvrC in an incision complex.

Its subcellular location is the cytoplasm. Its function is as follows. The UvrABC repair system catalyzes the recognition and processing of DNA lesions. A damage recognition complex composed of 2 UvrA and 2 UvrB subunits scans DNA for abnormalities. Upon binding of the UvrA(2)B(2) complex to a putative damaged site, the DNA wraps around one UvrB monomer. DNA wrap is dependent on ATP binding by UvrB and probably causes local melting of the DNA helix, facilitating insertion of UvrB beta-hairpin between the DNA strands. Then UvrB probes one DNA strand for the presence of a lesion. If a lesion is found the UvrA subunits dissociate and the UvrB-DNA preincision complex is formed. This complex is subsequently bound by UvrC and the second UvrB is released. If no lesion is found, the DNA wraps around the other UvrB subunit that will check the other stand for damage. This chain is UvrABC system protein B, found in Pectobacterium carotovorum subsp. carotovorum (strain PC1).